A 963-amino-acid chain; its full sequence is Ras-interacting protein 1 (963 aa).

The segment covering 1-10 (MLSGERKEGG) has biased composition (basic and acidic residues). 2 disordered regions span residues 1-22 (MLSG…LPVG) and 35-118 (LGRR…AQRW). Residues 41–57 (SAASVKSSSSDTGSRSS) are compositionally biased toward low complexity. Arg94 is modified (omega-N-methylarginine). The span at 96–113 (SGTGTTGSSGAGGPGTPG) shows a compositional bias: gly residues. Positions 144–259 (PPGVLKIFGA…RRFELRGREE (116 aa)) constitute a Ras-associating domain. A phosphoserine mark is found at Ser188, Ser280, and Ser292. Positions 267–356 (AFGAADSEGT…LSMAPGAADA (90 aa)) are disordered. The segment covering 290 to 301 (AASGGAALASPG) has biased composition (low complexity). The span at 302–313 (PGTGSGAPAGSG) shows a compositional bias: gly residues. A compositionally biased stretch (low complexity) spans 320–333 (NLSLRRSVSELSLQ). 4 positions are modified to phosphoserine: Ser326, Ser328, Ser331, and Ser419. The Dilute domain maps to 600 to 897 (GRLARLIKEA…PPAEREAVDT (298 aa)).

In terms of assembly, interacts with Ras family members that have been activated by GTP binding. Interacts with HRAS, RAP1A, RAP2, RRAS, RAF1 and RRAS2. Interacts with MYH9 and ARHGAP29. In terms of tissue distribution, highly expressed in heart. Detected at lower levels in placenta and pancreas.

Its subcellular location is the cytoplasm. The protein resides in the perinuclear region. It localises to the golgi apparatus. The protein localises to the golgi stack. Functionally, required for the proper formation of vascular structures that develop via both vasculogenesis and angiogenesis. Acts as a critical and vascular-specific regulator of GTPase signaling, cell architecture, and adhesion, which is essential for endothelial cell morphogenesis and blood vessel tubulogenesis. Regulates the activity of Rho GTPases in part by recruiting ARHGAP29 and suppressing RhoA signaling and dampening ROCK and MYH9 activities in endothelial cells. May act as effector for Golgi-bound HRAS and other Ras-like proteins. May promote HRAS-mediated transformation. Negative regulator of amino acid starvation-induced autophagy. This is Ras-interacting protein 1 (RASIP1) from Homo sapiens (Human).